The chain runs to 173 residues: DELTA-actitoxin-Oor1b (173 aa).

The tract at residues 6-25 is N-terminal region; it reads GAALGFNVHQTVLKALGQVS. 6 residues coordinate phosphocholine: serine 49, valine 82, serine 100, proline 102, tyrosine 128, and tyrosine 133. The interval 100 to 115 is trp-rich region, which is important for the binding to lipid membrane; it reads SVPFDYNLYSNWWDVK.

Belongs to the actinoporin family. Sea anemone subfamily. In terms of assembly, octamer or nonamer in membranes. Monomer in the soluble state.

It localises to the secreted. The protein localises to the nematocyst. It is found in the target cell membrane. In terms of biological role, pore-forming protein that forms cations-selective hydrophilic pores of around 1 nm and causes cardiac stimulation and cytolysis. Pore formation is a multi-step process that involves specific recognition of membrane sphingomyelin (but neither cholesterol nor phosphatidylcholine) using aromatic rich region and adjacent phosphocholine (POC) binding site, firm binding to the membrane (mainly driven by hydrophobic interactions) accompanied by the transfer of the N-terminal region to the lipid-water interface and finally pore formation after oligomerization of monomers. Cytolytic effects include red blood cells hemolysis, platelet aggregation and lysis, cytotoxic and cytostatic effects on fibroblasts. Lethality in mammals has been ascribed to severe vasospasm of coronary vessels, cardiac arrhythmia, and inotropic effects. The chain is DELTA-actitoxin-Oor1b from Oulactis orientalis (Japan anemone).